Reading from the N-terminus, the 404-residue chain is Cysteine desulfurase IscS (404 aa).

Residues 75–76 (AT), Asn155, Gln183, and 203–205 (SAH) each bind pyridoxal 5'-phosphate. Lys206 carries the N6-(pyridoxal phosphate)lysine modification. Residue Thr243 participates in pyridoxal 5'-phosphate binding. Catalysis depends on Cys328, which acts as the Cysteine persulfide intermediate. Cys328 contributes to the [2Fe-2S] cluster binding site.

Belongs to the class-V pyridoxal-phosphate-dependent aminotransferase family. NifS/IscS subfamily. In terms of assembly, homodimer. Forms a heterotetramer with IscU, interacts with other sulfur acceptors. The cofactor is pyridoxal 5'-phosphate.

The protein localises to the cytoplasm. It carries out the reaction (sulfur carrier)-H + L-cysteine = (sulfur carrier)-SH + L-alanine. The protein operates within cofactor biosynthesis; iron-sulfur cluster biosynthesis. Master enzyme that delivers sulfur to a number of partners involved in Fe-S cluster assembly, tRNA modification or cofactor biosynthesis. Catalyzes the removal of elemental sulfur atoms from cysteine to produce alanine. Functions as a sulfur delivery protein for Fe-S cluster synthesis onto IscU, an Fe-S scaffold assembly protein, as well as other S acceptor proteins. The polypeptide is Cysteine desulfurase IscS (Pseudomonas syringae pv. tomato (strain ATCC BAA-871 / DC3000)).